The primary structure comprises 2319 residues: Coagulation factor VIII (2319 aa).

The N-terminal stretch at 1-19 (MQIALFACFFLSLFNFCSS) is a signal peptide. 2 consecutive Plastocyanin-like domains span residues 20–199 (AIRR…LLVC) and 207–349 (ERTQ…VDSC). The 330-residue stretch at 20–349 (AIRRYYLGAV…MEAYVKVDSC (330 aa)) folds into the F5/8 type A 1 domain. Residue Asn61 is glycosylated (N-linked (GlcNAc...) asparagine). Cys173 and Cys199 form a disulfide bridge. Residues Asn233 and Asn259 are each glycosylated (N-linked (GlcNAc...) asparagine). Tyr367 is modified (sulfotyrosine). Plastocyanin-like domains follow at residues 399 to 573 (KTWI…LLIC) and 583 to 730 (NQMM…VSSC). Residues 399–730 (KTWIHYISAE…MTALLKVSSC (332 aa)) enclose the F5/8 type A 2 domain. The N-linked (GlcNAc...) asparagine glycan is linked to Asn423. Cys547 and Cys573 form a disulfide bridge. Asn601 is a glycosylation site (N-linked (GlcNAc...) asparagine). Sulfotyrosine occurs at positions 737, 738, and 742. Residues 760 to 1640 (SFFQNTNHPN…IPPVLKRHQR (881 aa)) are b. 19 N-linked (GlcNAc...) asparagine glycosylation sites follow: Asn880, Asn958, Asn1015, Asn1022, Asn1026, Asn1044, Asn1076, Asn1087, Asn1136, Asn1161, Asn1192, Asn1255, Asn1268, Asn1273, Asn1274, Asn1302, Asn1316, Asn1340, and Asn1378. Positions 1530–1549 (WNKAKRHGESIKGKTESSKN) are disordered. Positions 1536-1548 (HGESIKGKTESSK) are enriched in basic and acidic residues. 2 positions are modified to sulfotyrosine: Tyr1669 and Tyr1687. Plastocyanin-like domains lie at 1683–1845 (KTRH…LLIC) and 1855–2008 (GRQV…SKQC). The region spanning 1683-2008 (KTRHYFIAAV…TLFLVYSKQC (326 aa)) is the F5/8 type A 3 domain. An N-linked (GlcNAc...) asparagine glycan is attached at Asn1797. 3 cysteine pairs are disulfide-bonded: Cys1819–Cys1845, Cys2008–Cys2156, and Cys2161–Cys2313. 2 consecutive F5/8 type C domains span residues 2008 to 2156 (CQIP…LMGC) and 2161 to 2313 (CSIP…ILGC). Residue Asn2105 is glycosylated (N-linked (GlcNAc...) asparagine).

This sequence belongs to the multicopper oxidase family. As to quaternary structure, interacts with vWF. vWF binding is essential for the stabilization of F8 in circulation. Post-translationally, the binding of vWF and activation depend on the sulfation of Tyr-1669. In terms of processing, proteolytically cleaved by cathepsin CTSG to produce a partially activated form. As to expression, found in most tissues.

The protein localises to the secreted. Its subcellular location is the extracellular space. In terms of biological role, factor VIII, along with calcium and phospholipid, acts as a cofactor for factor IXa when it converts factor X to the activated form, factor Xa. The polypeptide is Coagulation factor VIII (F8) (Mus musculus (Mouse)).